A 324-amino-acid polypeptide reads, in one-letter code: Olfactory receptor 5A2 (324 aa).

Residues 1–26 are Extracellular-facing; sequence MAVGRNNTIVTKFILLGLSDHPQMKI. A glycan (N-linked (GlcNAc...) asparagine) is linked at Asn6. The chain crosses the membrane as a helical span at residues 27-47; sequence FLFMLFLGLYLLTLAWNLSLI. The Cytoplasmic segment spans residues 48–55; sequence ALIKMDSH. The helical transmembrane segment at 56-76 threads the bilayer; that stretch reads LHMPMYFFLSNLSFLDICYVS. The Extracellular segment spans residues 77 to 100; it reads STAPKMLSDIITEQKTISFVGCAT. A disulfide bridge connects residues Cys98 and Cys190. A helical membrane pass occupies residues 101–121; sequence QYFVFCGMGLTECFLLAAMAY. The Cytoplasmic portion of the chain corresponds to 122–134; the sequence is DRYAAICNPLLYT. The chain crosses the membrane as a helical span at residues 135–155; sequence VLISHTLCLKMVVGAYVGGFL. Topologically, residues 156–197 are extracellular; the sequence is SSFIETYSVYQHDFCGPYMINHFFCDLPPVLALSCSDTFTSE. A helical transmembrane segment spans residues 198–218; it reads VVTFIVSVVVGIVSVLVVLIS. At 219 to 238 the chain is on the cytoplasmic side; the sequence is YGYIVAAVVKISSATGRTKA. A helical transmembrane segment spans residues 239 to 259; it reads FSTCASHLTAVTLFYGSGFFM. At 260–272 the chain is on the extracellular side; it reads YMRPSSSYSLNRD. The helical transmembrane segment at 273-293 threads the bilayer; that stretch reads KVVSIFYALVIPVVNPIIYSF. The Cytoplasmic segment spans residues 294–324; it reads RNKEIKNAMRKAMERDPGISHGGPFIFMTLG.

The protein belongs to the G-protein coupled receptor 1 family.

It localises to the cell membrane. Its function is as follows. Odorant receptor. The sequence is that of Olfactory receptor 5A2 (OR5A2) from Homo sapiens (Human).